The following is a 232-amino-acid chain: 5'-methylthioadenosine/S-adenosylhomocysteine nucleosidase (232 aa).

Glu12 (proton acceptor) is an active-site residue. Residues Gly78, Ile152, and 173-174 (ME) contribute to the substrate site. The active-site Proton donor is the Asp197.

It belongs to the PNP/UDP phosphorylase family. MtnN subfamily. Homodimer.

It carries out the reaction S-adenosyl-L-homocysteine + H2O = S-(5-deoxy-D-ribos-5-yl)-L-homocysteine + adenine. The enzyme catalyses S-methyl-5'-thioadenosine + H2O = 5-(methylsulfanyl)-D-ribose + adenine. It catalyses the reaction 5'-deoxyadenosine + H2O = 5-deoxy-D-ribose + adenine. It functions in the pathway amino-acid biosynthesis; L-methionine biosynthesis via salvage pathway; S-methyl-5-thio-alpha-D-ribose 1-phosphate from S-methyl-5'-thioadenosine (hydrolase route): step 1/2. Catalyzes the irreversible cleavage of the glycosidic bond in both 5'-methylthioadenosine (MTA) and S-adenosylhomocysteine (SAH/AdoHcy) to adenine and the corresponding thioribose, 5'-methylthioribose and S-ribosylhomocysteine, respectively. Also cleaves 5'-deoxyadenosine, a toxic by-product of radical S-adenosylmethionine (SAM) enzymes, into 5-deoxyribose and adenine. Thus, is required for in vivo function of the radical SAM enzymes biotin synthase and lipoic acid synthase, that are inhibited by 5'-deoxyadenosine accumulation. This is 5'-methylthioadenosine/S-adenosylhomocysteine nucleosidase from Salmonella paratyphi A (strain ATCC 9150 / SARB42).